Consider the following 128-residue polypeptide: Ribonuclease P protein component (128 aa).

This sequence belongs to the RnpA family. In terms of assembly, consists of a catalytic RNA component (M1 or rnpB) and a protein subunit.

It carries out the reaction Endonucleolytic cleavage of RNA, removing 5'-extranucleotides from tRNA precursor.. Its function is as follows. RNaseP catalyzes the removal of the 5'-leader sequence from pre-tRNA to produce the mature 5'-terminus. It can also cleave other RNA substrates such as 4.5S RNA. The protein component plays an auxiliary but essential role in vivo by binding to the 5'-leader sequence and broadening the substrate specificity of the ribozyme. The sequence is that of Ribonuclease P protein component from Prochlorococcus marinus (strain MIT 9313).